A 712-amino-acid chain; its full sequence is Ferric reductase transmembrane component 6 (712 aa).

The signal sequence occupies residues 1–17 (MHRTLLFLTWLISLTKA). Residues 18–167 (FNIKLPHTEK…HAHAYNLDIS (150 aa)) lie on the Vacuolar side of the membrane. 3 N-linked (GlcNAc...) asparagine glycosylation sites follow: N89, N112, and N124. A helical membrane pass occupies residues 168–188 (SVYGAYLTYYFVIVGIIAVFF). Residues 189–244 (HMSHYNGLNRALFASRFVNYIRGHFVLPTFLVDKHANHFKFLNVEVFTGLMPNSLE) lie on the Cytoplasmic side of the membrane. The chain crosses the membrane as a helical span at residues 245–265 (AWIIFGYTLANIIFLSISYII). The Vacuolar portion of the chain corresponds to 266-287 (DPYNLIFNSHLSQFTRLLADRS). A Ferric oxidoreductase domain is found at 287–411 (SGILAFTQFP…YCCWQHVKIF (125 aa)). Residues 288–308 (GILAFTQFPLIIIFTARNSFL) form a helical membrane-spanning segment. The Cytoplasmic portion of the chain corresponds to 309–328 (EFLTGVKFNSFISFHKWIGR). Residues H323 and H337 each contribute to the heme site. The chain crosses the membrane as a helical span at residues 329 to 349 (IMVLNATIHSLSYSLFAIINH). Residues 350–360 (AFKISNKQLYW) lie on the Vacuolar side of the membrane. Residues 361 to 381 (KFGIASITVLCVLLVLSLGIV) form a helical membrane-spanning segment. The Cytoplasmic portion of the chain corresponds to 382–387 (RKRHYE). The chain crosses the membrane as a helical span at residues 388–408 (FFLYTHIILALLFFYCCWQHV). Heme contacts are provided by H393 and H407. Residues 409–416 (KIFNGWKE) lie on the Vacuolar side of the membrane. An FAD-binding FR-type domain is found at 412–546 (NGWKEWIVVS…EGPYGPSNLH (135 aa)). A helical membrane pass occupies residues 417 to 437 (WIVVSLLIWGLEKLFRIWNIL). The Cytoplasmic segment spans residues 438–712 (QFRFPKATLI…IEYFEEYQCW (275 aa)). 493–499 (HPFTIID) contacts FAD. NADP(+) is bound by residues 538–541 (GPYG) and 678–679 (CG).

The protein belongs to the ferric reductase (FRE) family. FAD is required as a cofactor.

The protein resides in the vacuole membrane. The catalysed reaction is 2 a Fe(II)-siderophore + NADP(+) + H(+) = 2 a Fe(III)-siderophore + NADPH. Functionally, metalloreductase responsible for reducing vacuolar iron and copper prior to transport into the cytosol. Catalyzes the reduction of Fe(3+) to Fe(2+) and Cu(2+) to Cu(+), respectively, which can then be transported by the respective vacuolar efflux systems to the cytosol. The polypeptide is Ferric reductase transmembrane component 6 (FRE6) (Saccharomyces cerevisiae (strain ATCC 204508 / S288c) (Baker's yeast)).